The primary structure comprises 440 residues: Enolase (440 aa).

Gln168 is a (2R)-2-phosphoglycerate binding site. The active-site Proton donor is Glu210. The Mg(2+) site is built by Asp249, Glu300, and Asp326. Residues Lys351, Arg380, Ser381, and Lys402 each contribute to the (2R)-2-phosphoglycerate site. Lys351 functions as the Proton acceptor in the catalytic mechanism.

This sequence belongs to the enolase family. Mg(2+) serves as cofactor.

Its subcellular location is the cytoplasm. The protein localises to the secreted. It is found in the cell surface. It carries out the reaction (2R)-2-phosphoglycerate = phosphoenolpyruvate + H2O. Its pathway is carbohydrate degradation; glycolysis; pyruvate from D-glyceraldehyde 3-phosphate: step 4/5. Its function is as follows. Catalyzes the reversible conversion of 2-phosphoglycerate (2-PG) into phosphoenolpyruvate (PEP). It is essential for the degradation of carbohydrates via glycolysis. In Ureaplasma parvum serovar 3 (strain ATCC 27815 / 27 / NCTC 11736), this protein is Enolase.